A 411-amino-acid chain; its full sequence is Indian hedgehog protein (411 aa).

The N-terminal stretch at 1 to 27 is a signal peptide; sequence MSPARLRPRLHFCLVLLLLLVVPAAWG. A lipid anchor (N-palmitoyl cysteine) is attached at Cys-28. Glu-94, Glu-95, Asp-100, Thr-130, Glu-131, Asp-134, and Asp-136 together coordinate Ca(2+). 3 residues coordinate Zn(2+): His-145, Asp-152, and His-187. Gly-202 carries Cholesterol glycine ester lipidation. N-linked (GlcNAc...) asparagine glycosylation occurs at Asn-282.

The protein belongs to the hedgehog family. As to quaternary structure, multimer. Interacts with BOC and CDON. Interacts with PTCH1. Interacts with glypican GPC3. Cholesterylation is required for N-product targeting to lipid rafts and multimerization. In terms of processing, the C-terminal domain displays an autoproteolysis activity and a cholesterol transferase activity. Both activities result in the cleavage of the full-length protein and covalent attachment of a cholesterol moiety to the C-terminal of the newly generated N-product. The N-product is the active species in both local and long-range signaling, whereas the C-product is degraded in the endoplasmic reticulum. Post-translationally, N-palmitoylation by HHAT of N-product is required for indian hedgehog protein N-product multimerization and full activity. As to expression, expressed in embryonic lung, and in adult kidney and liver.

Its subcellular location is the cell membrane. The protein localises to the endoplasmic reticulum membrane. It localises to the golgi apparatus membrane. The protein resides in the secreted. It carries out the reaction glycyl-L-cysteinyl-[protein] + cholesterol + H(+) = [protein]-C-terminal glycyl cholesterol ester + N-terminal L-cysteinyl-[protein]. Its function is as follows. Plays a role in embryonic morphogenesis; it is involved in the regulation of endochondral skeleton formation, and the development of retinal pigment epithelium (RPE), photoreceptors and periocular tissues. Functionally, the C-terminal part of the indian hedgehog protein precursor displays an autoproteolysis and a cholesterol transferase activity. Both activities result in the cleavage of the full-length protein into two parts followed by the covalent attachment of a cholesterol moiety to the C-terminal of the newly generated N-product. Both activities occur in the endoplasmic reticulum. Plays a role in hedgehog paracrine signaling. Associated with the very-low-density lipoprotein (VLDL) particles to function as a circulating morphogen for endothelial cell integrity maintenance. In terms of biological role, the dually lipidated indian hedgehog protein N-product is a morphogen which is essential for a variety of patterning events during development. Binds to the patched (PTCH1) receptor, which functions in association with smoothened (SMO), to activate the transcription of target genes. Plays a role in morphogenesis of the skeleton by coordinating growth and differentiation of the endochondral skeleton. Positively regulates PTHLH expression during endochondral bone formation preventing chondrocyte hypertrophy. In contrast, participates in normal chondrocyte proliferation in a PTHLH-independent pathway. This is Indian hedgehog protein from Homo sapiens (Human).